The chain runs to 519 residues: Mannosyl-oligosaccharide alpha-1,2-mannosidase (519 aa).

An N-terminal signal peptide occupies residues 1–22 (MKGSPVLAVCAAALTLIPSVVA). Asparagine 187 is a glycosylation site (N-linked (GlcNAc...) asparagine). An intrachain disulfide couples cysteine 337 to cysteine 366. The active-site Proton donor is glutamate 380. An N-linked (GlcNAc...) asparagine glycan is attached at asparagine 443. Threonine 507 serves as a coordination point for Ca(2+).

It belongs to the glycosyl hydrolase 47 family. In terms of assembly, monomer. It depends on Ca(2+) as a cofactor. Mg(2+) is required as a cofactor.

Its subcellular location is the secreted. It carries out the reaction N(4)-(alpha-D-Man-(1-&gt;2)-alpha-D-Man-(1-&gt;2)-alpha-D-Man-(1-&gt;3)-[alpha-D-Man-(1-&gt;2)-alpha-D-Man-(1-&gt;3)-[alpha-D-Man-(1-&gt;2)-alpha-D-Man-(1-&gt;6)]-alpha-D-Man-(1-&gt;6)]-beta-D-Man-(1-&gt;4)-beta-D-GlcNAc-(1-&gt;4)-beta-D-GlcNAc)-L-asparaginyl-[protein] (N-glucan mannose isomer 9A1,2,3B1,2,3) + 4 H2O = N(4)-(alpha-D-Man-(1-&gt;3)-[alpha-D-Man-(1-&gt;3)-[alpha-D-Man-(1-&gt;6)]-alpha-D-Man-(1-&gt;6)]-beta-D-Man-(1-&gt;4)-beta-D-GlcNAc-(1-&gt;4)-beta-D-GlcNAc)-L-asparaginyl-[protein] (N-glucan mannose isomer 5A1,2) + 4 beta-D-mannose. The catalysed reaction is N(4)-(alpha-D-Man-(1-&gt;2)-alpha-D-Man-(1-&gt;2)-alpha-D-Man-(1-&gt;3)-[alpha-D-Man-(1-&gt;3)-[alpha-D-Man-(1-&gt;2)-alpha-D-Man-(1-&gt;6)]-alpha-D-Man-(1-&gt;6)]-beta-D-Man-(1-&gt;4)-beta-D-GlcNAc-(1-&gt;4)-beta-D-GlcNAc)-L-asparaginyl-[protein] (N-glucan mannose isomer 8A1,2,3B1,3) + 3 H2O = N(4)-(alpha-D-Man-(1-&gt;3)-[alpha-D-Man-(1-&gt;3)-[alpha-D-Man-(1-&gt;6)]-alpha-D-Man-(1-&gt;6)]-beta-D-Man-(1-&gt;4)-beta-D-GlcNAc-(1-&gt;4)-beta-D-GlcNAc)-L-asparaginyl-[protein] (N-glucan mannose isomer 5A1,2) + 3 beta-D-mannose. It functions in the pathway protein modification; protein glycosylation. Its function is as follows. Alpha-mannosidase involved in the maturation of Asn-linked oligosaccharides. Progressively trims alpha-1,2-linked mannose residues from Man(9)GlcNAc(2) to produce Man(5)GlcNAc(2). The polypeptide is Mannosyl-oligosaccharide alpha-1,2-mannosidase (Coccidioides posadasii (strain RMSCC 757 / Silveira) (Valley fever fungus)).